Here is a 148-residue protein sequence, read N- to C-terminus: Snaclec B9 (148 aa).

A signal peptide spans 1–24 (MGRFIFVSFGLLVVFLSLSGTGAA). Cystine bridges form between Cys-27–Cys-38, Cys-55–Cys-144, and Cys-121–Cys-136. Residues 34-145 (YDQHCYKVFD…CRLLGHFVCK (112 aa)) enclose the C-type lectin domain. 2 N-linked (GlcNAc...) asparagine glycosylation sites follow: Asn-57 and Asn-60.

Belongs to the snaclec family. Heterodimer; disulfide-linked. As to expression, expressed by the venom gland.

The protein resides in the secreted. In terms of biological role, interferes with one step of hemostasis (modulation of platelet aggregation, or coagulation cascade, for example). This Macrovipera lebetinus (Levantine viper) protein is Snaclec B9.